The following is a 497-amino-acid chain: Putative diacyglycerol O-acyltransferase MT3584 (497 aa).

Catalysis depends on His-143, which acts as the Proton acceptor.

This sequence belongs to the long-chain O-acyltransferase family.

The catalysed reaction is an acyl-CoA + a 1,2-diacyl-sn-glycerol = a triacyl-sn-glycerol + CoA. It functions in the pathway glycerolipid metabolism; triacylglycerol biosynthesis. This is Putative diacyglycerol O-acyltransferase MT3584 from Mycobacterium tuberculosis (strain CDC 1551 / Oshkosh).